A 259-amino-acid chain; its full sequence is Acyl-[acyl-carrier-protein]--UDP-N-acetylglucosamine O-acyltransferase (259 aa).

This sequence belongs to the transferase hexapeptide repeat family. LpxA subfamily. As to quaternary structure, homotrimer.

It is found in the cytoplasm. It catalyses the reaction a (3R)-hydroxyacyl-[ACP] + UDP-N-acetyl-alpha-D-glucosamine = a UDP-3-O-[(3R)-3-hydroxyacyl]-N-acetyl-alpha-D-glucosamine + holo-[ACP]. Its pathway is glycolipid biosynthesis; lipid IV(A) biosynthesis; lipid IV(A) from (3R)-3-hydroxytetradecanoyl-[acyl-carrier-protein] and UDP-N-acetyl-alpha-D-glucosamine: step 1/6. Its function is as follows. Involved in the biosynthesis of lipid A, a phosphorylated glycolipid that anchors the lipopolysaccharide to the outer membrane of the cell. This chain is Acyl-[acyl-carrier-protein]--UDP-N-acetylglucosamine O-acyltransferase, found in Nautilia profundicola (strain ATCC BAA-1463 / DSM 18972 / AmH).